A 365-amino-acid chain; its full sequence is Cobalt-precorrin-5B C(1)-methyltransferase (365 aa).

Belongs to the CbiD family.

It catalyses the reaction Co-precorrin-5B + S-adenosyl-L-methionine = Co-precorrin-6A + S-adenosyl-L-homocysteine. It functions in the pathway cofactor biosynthesis; adenosylcobalamin biosynthesis; cob(II)yrinate a,c-diamide from sirohydrochlorin (anaerobic route): step 6/10. Catalyzes the methylation of C-1 in cobalt-precorrin-5B to form cobalt-precorrin-6A. This is Cobalt-precorrin-5B C(1)-methyltransferase from Methanococcus maripaludis (strain C6 / ATCC BAA-1332).